We begin with the raw amino-acid sequence, 825 residues long: Putative pentatricopeptide repeat-containing protein At2g01510 (825 aa).

17 PPR repeats span residues 47–77 (DTCR…MPHK), 78–108 (NTVS…MPDR), 109–143 (TVVT…SSCT), 146–180 (DHVT…GFDT), 183–213 (FLTV…IPEK), 214–248 (DSVT…GHQP), 249–283 (SDFT…GFSR), 284–314 (DASV…MPEL), 315–349 (DFVS…GFDR), 350–384 (RNFP…TADS), 385–415 (ILHV…LPQR), 416–450 (TTVS…NLRA), 451–485 (DQST…GNLE), 486–516 (NVFS…MPDR), 517–551 (NAVS…GLQP), 552–587 (DSVS…GITP), and 588–618 (KKKH…MPFE). The type E motif stretch occupies residues 623–699 (MWSSVLNACR…VPAYSWVEVN (77 aa)). A type E(+) motif region spans residues 700-730 (HKIHVFSSNDQTHPNGDEIVRKINELTAEIE). A type DYW motif region spans residues 731–825 (REGYKPDTSS…EGVCSCGDYW (95 aa)).

This sequence belongs to the PPR family. PCMP-H subfamily.

The sequence is that of Putative pentatricopeptide repeat-containing protein At2g01510 (PCMP-H36) from Arabidopsis thaliana (Mouse-ear cress).